We begin with the raw amino-acid sequence, 96 residues long: Co-chaperonin GroES (96 aa).

The protein belongs to the GroES chaperonin family. As to quaternary structure, heptamer of 7 subunits arranged in a ring. Interacts with the chaperonin GroEL.

Its subcellular location is the cytoplasm. Its function is as follows. Together with the chaperonin GroEL, plays an essential role in assisting protein folding. The GroEL-GroES system forms a nano-cage that allows encapsulation of the non-native substrate proteins and provides a physical environment optimized to promote and accelerate protein folding. GroES binds to the apical surface of the GroEL ring, thereby capping the opening of the GroEL channel. The chain is Co-chaperonin GroES from Citrifermentans bemidjiense (strain ATCC BAA-1014 / DSM 16622 / JCM 12645 / Bem) (Geobacter bemidjiensis).